The sequence spans 381 residues: Queuine tRNA-ribosyltransferase (381 aa).

The active-site Proton acceptor is Asp96. Residues 96–100 (DSGGF), Asp150, Gln193, and Gly220 each bind substrate. An RNA binding region spans residues 251–257 (GVGSPDA). Asp270 functions as the Nucleophile in the catalytic mechanism. The interval 275 to 279 (TRIAR) is RNA binding; important for wobble base 34 recognition. Zn(2+) contacts are provided by Cys308, Cys310, Cys313, and His339.

It belongs to the queuine tRNA-ribosyltransferase family. Homodimer. Within each dimer, one monomer is responsible for RNA recognition and catalysis, while the other monomer binds to the replacement base PreQ1. Zn(2+) is required as a cofactor.

The enzyme catalyses 7-aminomethyl-7-carbaguanine + guanosine(34) in tRNA = 7-aminomethyl-7-carbaguanosine(34) in tRNA + guanine. It functions in the pathway tRNA modification; tRNA-queuosine biosynthesis. Functionally, catalyzes the base-exchange of a guanine (G) residue with the queuine precursor 7-aminomethyl-7-deazaguanine (PreQ1) at position 34 (anticodon wobble position) in tRNAs with GU(N) anticodons (tRNA-Asp, -Asn, -His and -Tyr). Catalysis occurs through a double-displacement mechanism. The nucleophile active site attacks the C1' of nucleotide 34 to detach the guanine base from the RNA, forming a covalent enzyme-RNA intermediate. The proton acceptor active site deprotonates the incoming PreQ1, allowing a nucleophilic attack on the C1' of the ribose to form the product. After dissociation, two additional enzymatic reactions on the tRNA convert PreQ1 to queuine (Q), resulting in the hypermodified nucleoside queuosine (7-(((4,5-cis-dihydroxy-2-cyclopenten-1-yl)amino)methyl)-7-deazaguanosine). The chain is Queuine tRNA-ribosyltransferase from Bacillus subtilis (strain 168).